The chain runs to 84 residues: Small ribosomal subunit protein uS17 (84 aa).

It belongs to the universal ribosomal protein uS17 family. Part of the 30S ribosomal subunit.

In terms of biological role, one of the primary rRNA binding proteins, it binds specifically to the 5'-end of 16S ribosomal RNA. The sequence is that of Small ribosomal subunit protein uS17 from Treponema pallidum (strain Nichols).